The chain runs to 42 residues: Beta-2-microglobulin (42 aa).

An Ig-like C1-type domain is found at 5 to 42; the sequence is PKIQVYSRHPAZBGKPBFLBCYVSGFHPXZIZIBLLKB.

As to quaternary structure, heterodimer of an alpha chain and a beta chain. Beta-2-microglobulin is the beta-chain of major histocompatibility complex class I molecules.

The protein localises to the secreted. Its function is as follows. Component of the class I major histocompatibility complex (MHC). Involved in the presentation of peptide antigens to the immune system. This is Beta-2-microglobulin (B2M) from Canis lupus familiaris (Dog).